Here is a 444-residue protein sequence, read N- to C-terminus: Adiponectin receptor protein (444 aa).

The segment covering 1–13 has biased composition (polar residues); sequence MDSATNLLEQQGS. The segment at 1–24 is disordered; that stretch reads MDSATNLLEQQGSAADVSGGSHPA. The Cytoplasmic segment spans residues 1 to 204; sequence MDSATNLLEQ…KSIFRVHTET (204 aa). Residues 205 to 225 form a helical membrane-spanning segment; the sequence is GNIWTHLLGCIAFIGVALYFI. The Extracellular segment spans residues 226–237; the sequence is SRPSVEIQTQEK. A helical membrane pass occupies residues 238-258; the sequence is IVFGAFFIGAIVCLGFSFAFH. A Zn(2+)-binding site is contributed by histidine 258. Topologically, residues 259-276 are cytoplasmic; that stretch reads TLSCHSVEMGRLFSKLDY. Residues 277–297 form a helical membrane-spanning segment; sequence CGIALLIMGSFVPWLYYGFYC. Residues 298–302 lie on the Extracellular side of the membrane; it reads HYQPK. Residues 303 to 323 traverse the membrane as a helical segment; the sequence is VIYLSVVSILGILSIVVSLWD. At 324 to 334 the chain is on the cytoplasmic side; the sequence is KFSEPALRPLR. Residues 335-355 traverse the membrane as a helical segment; it reads AGVFMSFGLSGVIPAIHYSIM. Over 356–365 the chain is Extracellular; that stretch reads EGWFSQMSRA. A helical membrane pass occupies residues 366–386; the sequence is SLGWLILMGLLYILGALLYAL. Over 387–405 the chain is Cytoplasmic; it reads RVPERWFPGKFDIWGQSHQ. The Zn(2+) site is built by histidine 404 and histidine 408. A helical transmembrane segment spans residues 406 to 426; it reads IFHILVIAAAFVHYHGISEMA. Residues 427–444 lie on the Extracellular side of the membrane; the sequence is MYRVMYSECTVPIEPITF.

Belongs to the ADIPOR family. As to expression, in larval and adult brain, expressed in insulin-producing cells and in neurons of the subesophageal region. Also expressed in lateral neurons of the adult brain (at protein level). In third instar larvae, expressed in central nervous system (CNS), imaginal disk, salivary gland, fat body, gut and malphigian tubules.

It localises to the cell membrane. Its function is as follows. Adiponectin receptor. In insulin-producing cells, regulates insulin secretion and controls glucose and lipid metabolism. This chain is Adiponectin receptor protein (AdipoR), found in Drosophila melanogaster (Fruit fly).